A 489-amino-acid polypeptide reads, in one-letter code: Glutamyl-tRNA(Gln) amidotransferase subunit A (489 aa).

Catalysis depends on charge relay system residues lysine 77 and serine 152. The Acyl-ester intermediate role is filled by serine 176.

Belongs to the amidase family. GatA subfamily. As to quaternary structure, heterotrimer of A, B and C subunits.

It carries out the reaction L-glutamyl-tRNA(Gln) + L-glutamine + ATP + H2O = L-glutaminyl-tRNA(Gln) + L-glutamate + ADP + phosphate + H(+). Allows the formation of correctly charged Gln-tRNA(Gln) through the transamidation of misacylated Glu-tRNA(Gln) in organisms which lack glutaminyl-tRNA synthetase. The reaction takes place in the presence of glutamine and ATP through an activated gamma-phospho-Glu-tRNA(Gln). The sequence is that of Glutamyl-tRNA(Gln) amidotransferase subunit A from Levilactobacillus brevis (strain ATCC 367 / BCRC 12310 / CIP 105137 / JCM 1170 / LMG 11437 / NCIMB 947 / NCTC 947) (Lactobacillus brevis).